The primary structure comprises 133 residues: Small ribosomal subunit protein uS8 (133 aa).

This sequence belongs to the universal ribosomal protein uS8 family. Part of the 30S ribosomal subunit. Contacts proteins S5 and S12.

Functionally, one of the primary rRNA binding proteins, it binds directly to 16S rRNA central domain where it helps coordinate assembly of the platform of the 30S subunit. The polypeptide is Small ribosomal subunit protein uS8 (Chlamydia caviae (strain ATCC VR-813 / DSM 19441 / 03DC25 / GPIC) (Chlamydophila caviae)).